Reading from the N-terminus, the 225-residue chain is NAD(P)H-quinone oxidoreductase subunit K, chloroplastic (225 aa).

[4Fe-4S] cluster-binding residues include C43, C44, C108, and C139.

The protein belongs to the complex I 20 kDa subunit family. As to quaternary structure, NDH is composed of at least 16 different subunits, 5 of which are encoded in the nucleus. The cofactor is [4Fe-4S] cluster.

The protein resides in the plastid. It localises to the chloroplast thylakoid membrane. The catalysed reaction is a plastoquinone + NADH + (n+1) H(+)(in) = a plastoquinol + NAD(+) + n H(+)(out). It catalyses the reaction a plastoquinone + NADPH + (n+1) H(+)(in) = a plastoquinol + NADP(+) + n H(+)(out). In terms of biological role, NDH shuttles electrons from NAD(P)H:plastoquinone, via FMN and iron-sulfur (Fe-S) centers, to quinones in the photosynthetic chain and possibly in a chloroplast respiratory chain. The immediate electron acceptor for the enzyme in this species is believed to be plastoquinone. Couples the redox reaction to proton translocation, and thus conserves the redox energy in a proton gradient. The polypeptide is NAD(P)H-quinone oxidoreductase subunit K, chloroplastic (Nymphaea alba (White water-lily)).